The chain runs to 206 residues: Protein Ta0236 (206 aa).

One can recognise an AMMECR1 domain in the interval 16-205; that stretch reads DIGTKAVRLA…EKDPEGVVEK (190 aa).

In Thermoplasma acidophilum (strain ATCC 25905 / DSM 1728 / JCM 9062 / NBRC 15155 / AMRC-C165), this protein is Protein Ta0236.